A 229-amino-acid polypeptide reads, in one-letter code: Large ribosomal subunit protein uL1 (229 aa).

It belongs to the universal ribosomal protein uL1 family. Part of the 50S ribosomal subunit.

Binds directly to 23S rRNA. The L1 stalk is quite mobile in the ribosome, and is involved in E site tRNA release. Its function is as follows. Protein L1 is also a translational repressor protein, it controls the translation of the L11 operon by binding to its mRNA. In Listeria innocua serovar 6a (strain ATCC BAA-680 / CLIP 11262), this protein is Large ribosomal subunit protein uL1.